Here is a 456-residue protein sequence, read N- to C-terminus: Signal recognition particle 54 kDa protein (456 aa).

GTP-binding positions include 104 to 111 (GLYGNGKT), 184 to 188 (DTSGR), and 242 to 245 (TKMD).

Belongs to the GTP-binding SRP family. SRP54 subfamily. In terms of assembly, part of the signal recognition particle protein translocation system, which is composed of SRP and FtsY. Archaeal SRP consists of a 7S RNA molecule of 300 nucleotides and two protein subunits: SRP54 and SRP19.

The protein localises to the cytoplasm. It carries out the reaction GTP + H2O = GDP + phosphate + H(+). Involved in targeting and insertion of nascent membrane proteins into the cytoplasmic membrane. Binds to the hydrophobic signal sequence of the ribosome-nascent chain (RNC) as it emerges from the ribosomes. The SRP-RNC complex is then targeted to the cytoplasmic membrane where it interacts with the SRP receptor FtsY. This chain is Signal recognition particle 54 kDa protein, found in Thermoplasma acidophilum (strain ATCC 25905 / DSM 1728 / JCM 9062 / NBRC 15155 / AMRC-C165).